The primary structure comprises 683 residues: Acyl-CoA synthetase short-chain family member 3, mitochondrial (683 aa).

Residues 1–29 (MKPSWLQCRKVTGAGTLGAPLPGSPSVRG) constitute a mitochondrion transit peptide. 223 to 226 (EPGR) serves as a coordination point for CoA. Residues 421–423 (GER) and 442–447 (DHWWQT) contribute to the ATP site. Position 514 is an N6-succinyllysine (Lys-514). The residue at position 520 (Lys-520) is an N6-acetyllysine. Positions 535, 550, and 561 each coordinate ATP. Residue Arg-620 coordinates CoA.

The protein belongs to the ATP-dependent AMP-binding enzyme family. In terms of tissue distribution, expressed in a wide range of tissues, with the highest levels observed in the liver followed by kidney.

It is found in the mitochondrion matrix. It catalyses the reaction acetate + ATP + CoA = acetyl-CoA + AMP + diphosphate. The enzyme catalyses propanoate + ATP + CoA = propanoyl-CoA + AMP + diphosphate. The catalysed reaction is butanoate + ATP + CoA = butanoyl-CoA + AMP + diphosphate. Catalyzes the synthesis of acetyl-CoA from short-chain fatty acids. Propionate is the preferred substrate but can also utilize acetate and butyrate with a much lower affinity. This Rattus norvegicus (Rat) protein is Acyl-CoA synthetase short-chain family member 3, mitochondrial (Acss3).